A 139-amino-acid polypeptide reads, in one-letter code: Ribulose bisphosphate carboxylase small subunit (139 aa).

The protein belongs to the RuBisCO small chain family. In terms of assembly, heterohexadecamer of 8 large and 8 small subunits.

It is found in the plastid. It localises to the chloroplast. RuBisCO catalyzes two reactions: the carboxylation of D-ribulose 1,5-bisphosphate, the primary event in carbon dioxide fixation, as well as the oxidative fragmentation of the pentose substrate in the photorespiration process. Both reactions occur simultaneously and in competition at the same active site. Although the small subunit is not catalytic it is essential for maximal activity. The sequence is that of Ribulose bisphosphate carboxylase small subunit from Guillardia theta (Cryptophyte).